Reading from the N-terminus, the 450-residue chain is 3-phosphoshikimate 1-carboxyvinyltransferase (450 aa).

Lys-23, Ser-24, and Arg-28 together coordinate 3-phosphoshikimate. Residue Lys-23 coordinates phosphoenolpyruvate. Phosphoenolpyruvate is bound by residues Gly-96 and Arg-124. Positions 167, 168, 169, 196, 311, and 340 each coordinate 3-phosphoshikimate. Gln-169 contributes to the phosphoenolpyruvate binding site. The Proton acceptor role is filled by Glu-311. Residues Arg-344, Arg-385, and Lys-410 each contribute to the phosphoenolpyruvate site. The tract at residues 426–450 (GQGWGYPQPRSGQRARRATGQGSGG) is disordered.

Belongs to the EPSP synthase family. Monomer.

The protein resides in the cytoplasm. The catalysed reaction is 3-phosphoshikimate + phosphoenolpyruvate = 5-O-(1-carboxyvinyl)-3-phosphoshikimate + phosphate. Its pathway is metabolic intermediate biosynthesis; chorismate biosynthesis; chorismate from D-erythrose 4-phosphate and phosphoenolpyruvate: step 6/7. Its function is as follows. Catalyzes the transfer of the enolpyruvyl moiety of phosphoenolpyruvate (PEP) to the 5-hydroxyl of shikimate-3-phosphate (S3P) to produce enolpyruvyl shikimate-3-phosphate and inorganic phosphate. In Mycobacterium bovis (strain ATCC BAA-935 / AF2122/97), this protein is 3-phosphoshikimate 1-carboxyvinyltransferase.